A 551-amino-acid polypeptide reads, in one-letter code: MSDIAITISLLALVAVIGLWIGHWKIRGVGLGIGGVLFGGIIVAHFTNQYGLKLDAHTLHFVQEFGLILFVYTIGIQVGPGFFSSLRKSGLKLNAFAILIILLGSIAVVLVHKIADVPLDIALGIYSGAVTNTPALGAGQQILAELGVPQTTVTMGVSYAMAYPFGICGILLAMWLIRLFFNVKVDDEAARFNAESSQDKESLHNISLKVTNQNLDGLTLIQIPGFSDEEVVCSRLKRDDMEIVPKASTEIRTNDILQLVGDDNSLAKMRLIIGHEVDAPTVAYSGEIRSERVVVTNEKVLGKKIRALGIHQKYGVVISRLNRAGIELVPTGNTTLQFGDVLHMVGRSDVLNQAISVIGNAQQKLLQVQMLPVFIGIGLGVLVGSIPFYIPGFPVALKLGLAGGPLVVALILARIGTIGKLYWFMPPSANLALREIGIVLFLAVVGLKSGGSFFDTLVNGSGLEWMGYGIFITFVPLIIVGTIARLYGKLNYLTICGLLAGSMTDPPALAFANEIKEDNGAAALSYATVYPLVMFLRIMSPQLLAVLLWAA.

Transmembrane regions (helical) follow at residues 4-24 (IAIT…IGHW), 28-48 (GVGL…HFTN), 65-85 (FGLI…FFSS), 95-115 (AFAI…HKIA), and 157-177 (VSYA…MWLI). 2 RCK C-terminal domains span residues 191–275 (RFNA…IIGH) and 277–360 (VDAP…VIGN). The next 6 membrane-spanning stretches (helical) occupy residues 370–390 (MLPV…PFYI), 402–424 (AGGP…LYWF), 438–458 (IVLF…DTLV), 463–483 (LEWM…VGTI), 492–512 (YLTI…LAFA), and 529–549 (VYPL…VLLW).

It belongs to the AAE transporter (TC 2.A.81) family. YidE subfamily.

The protein resides in the cell membrane. The sequence is that of Putative transport protein HI_0035 from Haemophilus influenzae (strain ATCC 51907 / DSM 11121 / KW20 / Rd).